We begin with the raw amino-acid sequence, 88 residues long: Small ribosomal subunit protein uS17 (88 aa).

It belongs to the universal ribosomal protein uS17 family. As to quaternary structure, part of the 30S ribosomal subunit.

In terms of biological role, one of the primary rRNA binding proteins, it binds specifically to the 5'-end of 16S ribosomal RNA. This is Small ribosomal subunit protein uS17 from Stutzerimonas stutzeri (strain A1501) (Pseudomonas stutzeri).